The primary structure comprises 88 residues: Cell division topological specificity factor (88 aa).

Belongs to the MinE family.

Functionally, prevents the cell division inhibition by proteins MinC and MinD at internal division sites while permitting inhibition at polar sites. This ensures cell division at the proper site by restricting the formation of a division septum at the midpoint of the long axis of the cell. The polypeptide is Cell division topological specificity factor (Clostridium botulinum (strain Alaska E43 / Type E3)).